Here is a 495-residue protein sequence, read N- to C-terminus: L-arabinose isomerase (495 aa).

Residues E305, E332, H349, and H448 each coordinate Mn(2+).

The protein belongs to the arabinose isomerase family. Mn(2+) is required as a cofactor.

It carries out the reaction beta-L-arabinopyranose = L-ribulose. It functions in the pathway carbohydrate degradation; L-arabinose degradation via L-ribulose; D-xylulose 5-phosphate from L-arabinose (bacterial route): step 1/3. Functionally, catalyzes the conversion of L-arabinose to L-ribulose. In Actinobacillus succinogenes (strain ATCC 55618 / DSM 22257 / CCUG 43843 / 130Z), this protein is L-arabinose isomerase.